Here is a 96-residue protein sequence, read N- to C-terminus: MDIRNIIKRPIVTEKAVLMKEKSNKYTFVVDKSANKFQIKYAVETLFNVKVKSVHTSNCVGKSLKVGRYAAGYRSDWKKAIVKLGKGQEIQLADKV.

Belongs to the universal ribosomal protein uL23 family. As to quaternary structure, part of the 50S ribosomal subunit. Contacts protein L29, and trigger factor when it is bound to the ribosome.

One of the early assembly proteins it binds 23S rRNA. One of the proteins that surrounds the polypeptide exit tunnel on the outside of the ribosome. Forms the main docking site for trigger factor binding to the ribosome. The protein is Large ribosomal subunit protein uL23 of Endomicrobium trichonymphae.